Here is a 155-residue protein sequence, read N- to C-terminus: Large ribosomal subunit protein uL15 (155 aa).

The span at 1–16 (MVRRFKRAVKYRRGSR) shows a compositional bias: basic residues. The interval 1 to 35 (MVRRFKRAVKYRRGSRTHGWGRVGQHRKSGGSGGK) is disordered.

Belongs to the universal ribosomal protein uL15 family. As to quaternary structure, part of the 50S ribosomal subunit.

Its function is as follows. Binds to the 23S rRNA. This is Large ribosomal subunit protein uL15 from Pyrobaculum arsenaticum (strain DSM 13514 / JCM 11321 / PZ6).